A 1074-amino-acid chain; its full sequence is Zinc finger protein 518B (1074 aa).

The segment covering 12–24 (HLNGGHNSLTMSP) has biased composition (polar residues). A disordered region spans residues 12-36 (HLNGGHNSLTMSPKQPDANGAPRPN). C2H2-type zinc fingers lie at residues 162-184 (FICS…LVKH) and 190-213 (YQCE…KRVH). Glycyl lysine isopeptide (Lys-Gly) (interchain with G-Cter in SUMO2) cross-links involve residues Lys482, Lys491, and Lys558. Residues 568–590 (SNRKQEDNQTEEHKAVSTVGQIS) form a disordered region. The span at 570–582 (RKQEDNQTEEHKA) shows a compositional bias: basic and acidic residues. A Glycyl lysine isopeptide (Lys-Gly) (interchain with G-Cter in SUMO2) cross-link involves residue Lys594. Disordered regions lie at residues 603–632 (TGED…DGPV) and 678–704 (KPSS…KATS). Over residues 604 to 622 (GEDRSQQPGDKPLELKNSE) the composition is skewed to basic and acidic residues. A compositionally biased stretch (polar residues) spans 693-704 (GQASKGTSKATS). Residues Lys809, Lys846, and Lys860 each participate in a glycyl lysine isopeptide (Lys-Gly) (interchain with G-Cter in SUMO2) cross-link. The segment at 1036-1058 (FKCWFCGRLYEDQEEWMSHGQRH) adopts a C2H2-type 3 zinc-finger fold.

The protein belongs to the krueppel C2H2-type zinc-finger protein family.

Its subcellular location is the nucleus. Its function is as follows. Through its association with the EHMT1-EHMT2/G9A and PRC2/EED-EZH2 histone methyltransferase complexes may function in gene silencing, regulating repressive post-translational methylation of histone tails at promoters of target genes. The chain is Zinc finger protein 518B (ZNF518B) from Homo sapiens (Human).